Here is a 233-residue protein sequence, read N- to C-terminus: Large ribosomal subunit protein uL1 (233 aa).

The protein belongs to the universal ribosomal protein uL1 family. As to quaternary structure, part of the 50S ribosomal subunit.

Binds directly to 23S rRNA. The L1 stalk is quite mobile in the ribosome, and is involved in E site tRNA release. Its function is as follows. Protein L1 is also a translational repressor protein, it controls the translation of the L11 operon by binding to its mRNA. The protein is Large ribosomal subunit protein uL1 of Campylobacter concisus (strain 13826).